The sequence spans 254 residues: tRNA (guanine-N(1)-)-methyltransferase (254 aa).

Residues G115 and 135 to 140 (VGDFVL) contribute to the S-adenosyl-L-methionine site.

Belongs to the RNA methyltransferase TrmD family. As to quaternary structure, homodimer.

The protein resides in the cytoplasm. It carries out the reaction guanosine(37) in tRNA + S-adenosyl-L-methionine = N(1)-methylguanosine(37) in tRNA + S-adenosyl-L-homocysteine + H(+). Its function is as follows. Specifically methylates guanosine-37 in various tRNAs. In Francisella tularensis subsp. tularensis (strain FSC 198), this protein is tRNA (guanine-N(1)-)-methyltransferase.